A 421-amino-acid polypeptide reads, in one-letter code: UDP-N-acetylglucosamine 1-carboxyvinyltransferase (421 aa).

Position 22–23 (22–23 (KN)) interacts with phosphoenolpyruvate. Residue arginine 93 coordinates UDP-N-acetyl-alpha-D-glucosamine. The active-site Proton donor is the cysteine 117. 2-(S-cysteinyl)pyruvic acid O-phosphothioketal is present on cysteine 117. UDP-N-acetyl-alpha-D-glucosamine is bound by residues 122–126 (RPVDL), aspartate 308, and isoleucine 330.

It belongs to the EPSP synthase family. MurA subfamily.

Its subcellular location is the cytoplasm. It catalyses the reaction phosphoenolpyruvate + UDP-N-acetyl-alpha-D-glucosamine = UDP-N-acetyl-3-O-(1-carboxyvinyl)-alpha-D-glucosamine + phosphate. Its pathway is cell wall biogenesis; peptidoglycan biosynthesis. Its function is as follows. Cell wall formation. Adds enolpyruvyl to UDP-N-acetylglucosamine. The sequence is that of UDP-N-acetylglucosamine 1-carboxyvinyltransferase from Pseudomonas putida (strain W619).